We begin with the raw amino-acid sequence, 634 residues long: Dachshund homolog 2 (634 aa).

The DACHbox-N stretch occupies residues 76–162 (RMVDMHGVKV…LITRKDFETL (87 aa)). 3 disordered regions span residues 171–194 (RKRQ…KRSL), 244–286 (LQGN…SGPQ), and 378–416 (IPES…MDHH). Residues 244-269 (LQGNGSQNGTESEPDDLNSTTGGSES) show a composition bias toward polar residues. Residues 396–412 (SQTSSHPSSSVSSSPSQ) are compositionally biased toward low complexity. A DACHbox-C region spans residues 488–568 (SSVETLLTNI…KAKRKLQEAL (81 aa)). Positions 494 to 588 (LTNIQGLLKV…EQALKQATSG (95 aa)) form a coiled coil.

This sequence belongs to the DACH/dachshund family. Interacts with SIX6. Interacts with EYA2. In terms of tissue distribution, expressed in embryo, and at lower levels in the newborn.

It localises to the nucleus. Transcription factor that is involved in regulation of organogenesis. Seems to be a regulator for SIX1 and SIX6. Seems to act as a corepressor of SIX6 in regulating proliferation by directly repressing cyclin-dependent kinase inhibitors, including the p27Kip1 promoter. Is recruited with SIX6 to the p27Kip1 promoter in embryonal retina. SIX6 corepression also seems to involve NCOR1, TBL1, HDAC1 and HDAC3. May be involved together with PAX3, SIX1, and EYA2 in regulation of myogenesis. In the developing somite, expression of DACH2 and PAX3 is regulated by the overlying ectoderm, and DACH2 and PAX3 positively regulate each other's expression. Probably binds to DNA via its DACHbox-N domain. This chain is Dachshund homolog 2 (Dach2), found in Mus musculus (Mouse).